The following is a 521-amino-acid chain: MTNIHTDKILILDFGAQYTQLIARRIREIGVYCEIWAWDHDPSEIAGFGAKGIILSGGPESTTLPGAPVAPQEVFDSGLPVFGICYGMQTLAAQLGGATEAADQREFGHAEVDVVAADALFAGLTDHAGASRLNVWMSHGDHVSQVPPGFTITATTDRIPVAAMSNEAKRWYGVQFHPEVTHTLQGQTLLRRFVVDVCGCQTLWTAANIIEDQIARVREQVGDDEVILGLSGGVDSSVVAALLHKAIGDKLTCVFVDTGLLRWQEGDQVMAMFAEHMGVKVIRVNAADRYFAKLEGVRDPEAKRKIIGNLFVEIFDEESNKLANAKWLAQGTIYPDVIESAGSKTGKAHVIKSHHNVGGLPEHMKLGLVEPLRELFKDEVRRLGVELGLPRTMVYRHPFPGPGLGVRILGEVKREYAELLAKADAIFIDELRKADLYDTTSQAFAVFLPVKSVGVVGDARAYEWVIALRAVETIDFMTAHWAHLPYDFLGTVSNRIINELRGVSRVVYDISGKPPATIEWE.

Positions 8–203 (KILILDFGAQ…VVDVCGCQTL (196 aa)) constitute a Glutamine amidotransferase type-1 domain. Residue Cys85 is the Nucleophile of the active site. Catalysis depends on residues His177 and Glu179. The 193-residue stretch at 204 to 396 (WTAANIIEDQ…LGLPRTMVYR (193 aa)) folds into the GMPS ATP-PPase domain. Position 231–237 (231–237 (SGGVDSS)) interacts with ATP.

In terms of assembly, homodimer.

It carries out the reaction XMP + L-glutamine + ATP + H2O = GMP + L-glutamate + AMP + diphosphate + 2 H(+). The protein operates within purine metabolism; GMP biosynthesis; GMP from XMP (L-Gln route): step 1/1. In terms of biological role, catalyzes the synthesis of GMP from XMP. In Xanthomonas axonopodis pv. citri (strain 306), this protein is GMP synthase [glutamine-hydrolyzing].